Here is a 556-residue protein sequence, read N- to C-terminus: Formate--tetrahydrofolate ligase 1 (556 aa).

65 to 72 provides a ligand contact to ATP; the sequence is TPAGEGKT.

The protein belongs to the formate--tetrahydrofolate ligase family.

The enzyme catalyses (6S)-5,6,7,8-tetrahydrofolate + formate + ATP = (6R)-10-formyltetrahydrofolate + ADP + phosphate. The protein operates within one-carbon metabolism; tetrahydrofolate interconversion. In Desulfitobacterium hafniense (strain Y51), this protein is Formate--tetrahydrofolate ligase 1.